The following is a 99-amino-acid chain: EPIDERMAL PATTERNING FACTOR-like protein 8 (99 aa).

Positions 1–35 (MDSSRKYKRCGFGAALFVANIFFSLLSLHCISGAH) are cleaved as a signal peptide. 3 disulfides stabilise this stretch: Cys53–Cys90, Cys57–Cys63, and Cys60–Cys92.

This sequence belongs to the plant cysteine rich small secretory peptide family. Epidermal patterning factor subfamily.

It localises to the secreted. In terms of biological role, controls stomatal patterning. This is EPIDERMAL PATTERNING FACTOR-like protein 8 from Arabidopsis thaliana (Mouse-ear cress).